Here is a 148-residue protein sequence, read N- to C-terminus: ATP synthase epsilon chain (148 aa).

It belongs to the ATPase epsilon chain family. F-type ATPases have 2 components, CF(1) - the catalytic core - and CF(0) - the membrane proton channel. CF(1) has five subunits: alpha(3), beta(3), gamma(1), delta(1), epsilon(1). CF(0) has three main subunits: a, b and c.

The protein localises to the cell membrane. Functionally, produces ATP from ADP in the presence of a proton gradient across the membrane. This Streptococcus thermophilus (strain ATCC BAA-491 / LMD-9) protein is ATP synthase epsilon chain.